Reading from the N-terminus, the 404-residue chain is Probable homogentisate phytyltransferase 1, chloroplastic (404 aa).

The N-terminal 77 residues, 1–77 (MDSLRLRPSL…SHHRIPHRPT (77 aa)), are a transit peptide targeting the chloroplast. The tract at residues 68–96 (SHHRIPHRPTSSSADASGQPLQSSAEAHD) is disordered. Residues 76-92 (PTSSSADASGQPLQSSA) are compositionally biased toward polar residues. 9 consecutive transmembrane segments (helical) span residues 119–139 (TVIG…ENLS), 144–164 (LFLT…IYIV), 184–204 (LASG…FAAM), 216–238 (PLFL…LPFL), 245–265 (VVAA…AFFL), 282–302 (LIFA…FKDI), 325–345 (VFWI…LMGA), 348–368 (ACLW…AILW), and 382–402 (ITSF…LIPL).

The protein belongs to the UbiA prenyltransferase family.

It is found in the plastid. The protein resides in the chloroplast thylakoid membrane. The enzyme catalyses phytyl diphosphate + homogentisate + H(+) = 2-methyl-6-phytyl-1,4-benzene-1,4-diol + CO2 + diphosphate. Its pathway is cofactor biosynthesis; tocopherol biosynthesis. Functionally, involved in the synthesis of tocopherol (vitamin E). Catalyzes the condensation of homogentisate and phytyl diphosphate to form dimethylphytylhydroquinone. The chain is Probable homogentisate phytyltransferase 1, chloroplastic (HPT1) from Oryza sativa subsp. japonica (Rice).